The following is a 502-amino-acid chain: Probable malate:quinone oxidoreductase (502 aa).

It belongs to the MQO family. FAD is required as a cofactor.

It carries out the reaction (S)-malate + a quinone = a quinol + oxaloacetate. It functions in the pathway carbohydrate metabolism; tricarboxylic acid cycle; oxaloacetate from (S)-malate (quinone route): step 1/1. This chain is Probable malate:quinone oxidoreductase, found in Synechococcus sp. (strain CC9605).